The primary structure comprises 372 residues: Flap endonuclease 1 (372 aa).

The interval 1–105 (MGVKGLNQLI…GELEKRLLRR (105 aa)) is N-domain. Asp-34 provides a ligand contact to Mg(2+). DNA-binding residues include Arg-47 and Arg-71. Mg(2+) contacts are provided by Asp-87, Glu-159, Glu-161, Asp-180, and Asp-182. An I-domain region spans residues 123–254 (EVLKFEKRLV…ATAFKLIKEH (132 aa)). Glu-159 is a DNA binding site. DNA-binding residues include Gly-232 and Asp-234. Mg(2+) is bound at residue Asp-234. Residues 339-347 (VQGRLDGFF) form an interaction with PCNA region.

Belongs to the XPG/RAD2 endonuclease family. FEN1 subfamily. Interacts with PCNA. Three molecules of RAD27 bind to one PCNA trimer with each molecule binding to one PCNA monomer. PCNA stimulates the nuclease activity without altering cleavage specificity. Requires Mg(2+) as cofactor. In terms of processing, phosphorylated. Phosphorylation upon DNA damage induces relocalization to the nuclear plasma.

The protein localises to the nucleus. It localises to the nucleolus. It is found in the nucleoplasm. The protein resides in the mitochondrion. Structure-specific nuclease with 5'-flap endonuclease and 5'-3' exonuclease activities involved in DNA replication and repair. During DNA replication, cleaves the 5'-overhanging flap structure that is generated by displacement synthesis when DNA polymerase encounters the 5'-end of a downstream Okazaki fragment. It enters the flap from the 5'-end and then tracks to cleave the flap base, leaving a nick for ligation. Also involved in the long patch base excision repair (LP-BER) pathway, by cleaving within the apurinic/apyrimidinic (AP) site-terminated flap. Acts as a genome stabilization factor that prevents flaps from equilibrating into structures that lead to duplications and deletions. Also possesses 5'-3' exonuclease activity on nicked or gapped double-stranded DNA, and exhibits RNase H activity. Also involved in replication and repair of rDNA and in repairing mitochondrial DNA. The chain is Flap endonuclease 1 from Candida dubliniensis (strain CD36 / ATCC MYA-646 / CBS 7987 / NCPF 3949 / NRRL Y-17841) (Yeast).